The primary structure comprises 84 residues: U21-theraphotoxin-Cg1a 2 (84 aa).

The first 21 residues, 1 to 21 (MKVSVLITLAVLGVMFLFTSA), serve as a signal peptide directing secretion. A propeptide spanning residues 22 to 47 (EERGSDQMDSPAWLKSMEIIFQSEER) is cleaved from the precursor. Disulfide bonds link Cys-49/Cys-63, Cys-56/Cys-68, and Cys-62/Cys-76. At Val-82 the chain carries Valine amide.

This sequence belongs to the neurotoxin 10 (Hwtx-1) family. 05 (F4a) subfamily. Expressed by the venom gland.

The protein resides in the secreted. Probable ion channel inhibitor. This Chilobrachys guangxiensis (Chinese earth tiger tarantula) protein is U21-theraphotoxin-Cg1a 2.